Reading from the N-terminus, the 344-residue chain is Dihydroorotate dehydrogenase (quinone) (344 aa).

FMN contacts are provided by residues 64–68 and Thr-88; that span reads AGLDK. Lys-68 lines the substrate pocket. Residue 113–117 participates in substrate binding; it reads NRMGF. Positions 144 and 177 each coordinate FMN. Asn-177 lines the substrate pocket. The active-site Nucleophile is Ser-180. Asn-182 is a substrate binding site. FMN is bound by residues Lys-222 and Thr-250. Residue 251-252 participates in substrate binding; sequence NT. FMN contacts are provided by residues Gly-273, Gly-302, and 323–324; that span reads YS.

The protein belongs to the dihydroorotate dehydrogenase family. Type 2 subfamily. As to quaternary structure, monomer. Requires FMN as cofactor.

It localises to the cell membrane. It catalyses the reaction (S)-dihydroorotate + a quinone = orotate + a quinol. It functions in the pathway pyrimidine metabolism; UMP biosynthesis via de novo pathway; orotate from (S)-dihydroorotate (quinone route): step 1/1. Functionally, catalyzes the conversion of dihydroorotate to orotate with quinone as electron acceptor. This is Dihydroorotate dehydrogenase (quinone) from Polynucleobacter necessarius subsp. necessarius (strain STIR1).